Consider the following 680-residue polypeptide: NADPH--cytochrome P450 reductase (680 aa).

The Lumenal portion of the chain corresponds to 1-5; it reads MALDK. A helical transmembrane segment spans residues 6–23; it reads LDLYVIITLVVAIAAYFA. The Cytoplasmic portion of the chain corresponds to 24–680; that stretch reads KNQFLDQQQD…VQNRYQEDVW (657 aa). The Flavodoxin-like domain maps to 60-204; the sequence is TLLLFGSQTG…DFLAWKDNVF (145 aa). FMN is bound by residues 66 to 71, 117 to 120, 152 to 161, and aspartate 187; these read SQTGTA, ATYG, and LGNSTYEFFN. Residues 264–509 enclose the FAD-binding FR-type domain; sequence THPFLARIVK…NGPRGKFSKF (246 aa). An NADP(+)-binding site is contributed by arginine 283. Residues 439–442, 457–459, and 473–476 contribute to the FAD site; these read RYYS, TAV, and GVVT. NADP(+) contacts are provided by residues threonine 537, 599–600, 606–610, and aspartate 642; these read SR and KVYVQ. Tryptophan 680 lines the FAD pocket.

Belongs to the NADPH--cytochrome P450 reductase family. This sequence in the N-terminal section; belongs to the flavodoxin family. The protein in the C-terminal section; belongs to the flavoprotein pyridine nucleotide cytochrome reductase family. The cofactor is FAD. It depends on FMN as a cofactor.

It is found in the endoplasmic reticulum membrane. The protein localises to the mitochondrion outer membrane. It localises to the cell membrane. It carries out the reaction 2 oxidized [cytochrome P450] + NADPH = 2 reduced [cytochrome P450] + NADP(+) + H(+). This enzyme is required for electron transfer from NADP to cytochrome P450 in microsomes. It can also provide electron transfer to heme oxygenase and cytochrome B5. Involved in ergosterol biosynthesis. This Candida tropicalis (Yeast) protein is NADPH--cytochrome P450 reductase.